A 113-amino-acid chain; its full sequence is U11-theraphotoxin-Hhn1o (113 aa).

Residues 1-21 form the signal peptide; it reads MNTVRVTFLLVFVLAVSLGQA. Positions 22 to 74 are excised as a propeptide; that stretch reads DKDENRMEMQEKTEQGKSYLDFAENLLLQKLEELEAKLLEEDSEESRNSRQKR. The segment at 61–83 is disordered; sequence EEDSEESRNSRQKRCIGEGVPCD. Disulfide bonds link Cys75–Cys90 and Cys82–Cys95.

The protein belongs to the neurotoxin 14 (magi-1) family. 01 (HNTX-16) subfamily. In terms of tissue distribution, expressed by the venom gland.

The protein localises to the secreted. In terms of biological role, probable ion channel inhibitor. The polypeptide is U11-theraphotoxin-Hhn1o (Cyriopagopus hainanus (Chinese bird spider)).